We begin with the raw amino-acid sequence, 199 residues long: UPF0329 protein ECU01_0120/ECU01_1490/ECU08_0050 (199 aa).

This sequence belongs to the UPF0329 family.

The chain is UPF0329 protein ECU01_0120/ECU01_1490/ECU08_0050 from Encephalitozoon cuniculi (strain GB-M1) (Microsporidian parasite).